We begin with the raw amino-acid sequence, 286 residues long: Bifunctional protein FolD (286 aa).

Residues Gly166–Ser168 and Ile232 each bind NADP(+).

The protein belongs to the tetrahydrofolate dehydrogenase/cyclohydrolase family. In terms of assembly, homodimer.

It carries out the reaction (6R)-5,10-methylene-5,6,7,8-tetrahydrofolate + NADP(+) = (6R)-5,10-methenyltetrahydrofolate + NADPH. It catalyses the reaction (6R)-5,10-methenyltetrahydrofolate + H2O = (6R)-10-formyltetrahydrofolate + H(+). It participates in one-carbon metabolism; tetrahydrofolate interconversion. Catalyzes the oxidation of 5,10-methylenetetrahydrofolate to 5,10-methenyltetrahydrofolate and then the hydrolysis of 5,10-methenyltetrahydrofolate to 10-formyltetrahydrofolate. This Shewanella woodyi (strain ATCC 51908 / MS32) protein is Bifunctional protein FolD.